The following is a 127-amino-acid chain: Fluoride-specific ion channel FluC (127 aa).

A run of 4 helical transmembrane segments spans residues 2 to 22 (LSSL…RWAI), 35 to 55 (LGTL…IAIF), 68 to 88 (LITT…LEVV), and 104 to 124 (LLNL…VVWI). 2 residues coordinate Na(+): G75 and T78.

This sequence belongs to the fluoride channel Fluc/FEX (TC 1.A.43) family.

It is found in the cell inner membrane. The catalysed reaction is fluoride(in) = fluoride(out). Its activity is regulated as follows. Na(+) is not transported, but it plays an essential structural role and its presence is essential for fluoride channel function. Functionally, fluoride-specific ion channel. Important for reducing fluoride concentration in the cell, thus reducing its toxicity. This Serratia proteamaculans (strain 568) protein is Fluoride-specific ion channel FluC.